Consider the following 92-residue polypeptide: Small ribosomal subunit protein uS19 (92 aa).

The protein belongs to the universal ribosomal protein uS19 family.

Functionally, protein S19 forms a complex with S13 that binds strongly to the 16S ribosomal RNA. The chain is Small ribosomal subunit protein uS19 from Bartonella bacilliformis (strain ATCC 35685 / KC583 / Herrer 020/F12,63).